The following is a 219-amino-acid chain: Response regulator ArlR (219 aa).

The Response regulatory domain occupies 3 to 116 (QILIVEDEQN…ELLARIRAIL (114 aa)). Asp52 is subject to 4-aspartylphosphate. Residues 122–219 (KDIIDVNGIT…TVRGVGYVIR (98 aa)) constitute a DNA-binding region (ompR/PhoB-type).

Phosphorylated by ArlS.

It localises to the cytoplasm. In terms of biological role, member of the two-component regulatory system ArlS/ArlR involved in the regulation of adhesion, autolysis, multidrug resistance and virulence. The polypeptide is Response regulator ArlR (arlR) (Staphylococcus aureus (strain USA300)).